The chain runs to 1155 residues: MDNNPNINECIPYNCLSNPEVEVLGGERIETGYTPIDISLSLTQFLLSEFVPGAGFVLGLVDIIWGIFGPSQWDAFLVQIEQLINQRIEEFARNQAISRLEGLSNLYQIYAESFREWEADPTNPALREEMRIQFNDMNSALTTAIPLFAVQNYQVPLLSVYVQAANLHLSVLRDVSVFGQRWGFDAATINSRYNDLTRLIGNYTDHAVRWYNTGLERVWGPDSRDWIRYNQFRRELTLTVLDIVSLFPNYDSRTYPIRTVSQLTREIYTNPVLENFDGSFRGSAQGIEGSIRSPHLMDILNSITIYTDAHRGEYYWSGHQIMASPVGFSGPEFTFPLYGTMGNAAPQQRIVAQLGQGVYRTLSSTLYRRPFNIGINNQQLSVLDGTEFAYGTSSNLPSAVYRKSGTVDSLDEIPPQNNNVPPRQGFSHRLSHVSMFRSGFSNSSVSIIRAPMFSWIHRSAEFNNIIPSSQITQIPLTKSTNLGSGTSVVKGPGFTGGDILRRTSPGQISTLRVNITAPLSQRYRVRIRYASTTNLQFHTSIDGRPINQGNFSATMSSGSNLQSGSFRTVGFTTPFNFSNGSSVFTLSAHVFNSGNEVYIDRIEFVPAEVTFEAEYDLERAQKAVNELFTSSNQIGLKTDVTDYHIDQVSNLVECLSDEFCLDEKKELSEKVKHAKRLSDERNLLQDPNFRGINRQLDRGWRGSTDITIQGGDDVFKENYVTLLGTFDECYPTYLYQKIDESKLKAYTRYQLRGYIEDSQDLEIYLIRYNAKHETVNVPGTGSLWPLSAPSPIGKCAHHSHHFSLDIDVGCTDLNEDLGVWVIFKIKTQDGHARLGNLEFLEEKPLVGEALARVKRAEKKWRDKREKLEWETNIVYKEAKESVDALFVNSQYDRLQADTNIAMIHAADKRVHSIREAYLPELSVIPGVNAAIFEELEGRIFTAFSLYDARNVIKNGDFNNGLSCWNVKGHVDVEEQNNHRSVLVVPEWEAEVSQEVRVCPGRGYILRVTAYKEGYGEGCVTIHEIENNTDELKFSNCVEEEVYPNNTVTCNDYTATQEEYEGTYTSRNRGYDGAYESNSSVPADYASAYEEKAYTDGRRDNPCESNRGYGDYTPLPAGYVTKELEYFPETDKVWIEIGETEGTFIVDSVELLLMEE.

It belongs to the delta endotoxin family.

Its function is as follows. Promotes colloidosmotic lysis by binding to the midgut epithelial cells of many lepidopteran larvae. This chain is Pesticidal crystal protein Cry1Ab (cry1Ab), found in Bacillus thuringiensis subsp. aizawai.